We begin with the raw amino-acid sequence, 276 residues long: Small ribosomal subunit protein uS2 (276 aa).

This sequence belongs to the universal ribosomal protein uS2 family.

This Chlamydia abortus (strain DSM 27085 / S26/3) (Chlamydophila abortus) protein is Small ribosomal subunit protein uS2.